The sequence spans 467 residues: L-seryl-tRNA(Sec) selenium transferase (467 aa).

Lys298 carries the post-translational modification N6-(pyridoxal phosphate)lysine.

The protein belongs to the SelA family. Pyridoxal 5'-phosphate serves as cofactor.

It localises to the cytoplasm. The enzyme catalyses L-seryl-tRNA(Sec) + selenophosphate + H(+) = L-selenocysteinyl-tRNA(Sec) + phosphate. Its pathway is aminoacyl-tRNA biosynthesis; selenocysteinyl-tRNA(Sec) biosynthesis; selenocysteinyl-tRNA(Sec) from L-seryl-tRNA(Sec) (bacterial route): step 1/1. Its function is as follows. Converts seryl-tRNA(Sec) to selenocysteinyl-tRNA(Sec) required for selenoprotein biosynthesis. In Alkaliphilus metalliredigens (strain QYMF), this protein is L-seryl-tRNA(Sec) selenium transferase.